We begin with the raw amino-acid sequence, 22 residues long: Mu-conotoxin GIIIB (22 aa).

3 cysteine pairs are disulfide-bonded: Cys-3–Cys-15, Cys-4–Cys-20, and Cys-10–Cys-21. A 4-hydroxyproline; partial mark is found at Pro-6 and Pro-7. A 4-hydroxyproline modification is found at Pro-17. Residue Ala-22 is modified to Alanine amide.

It belongs to the conotoxin M superfamily. Expressed by the venom duct.

The protein localises to the secreted. In terms of biological role, mu-conotoxins block voltage-gated sodium channels (Nav). The protein is Mu-conotoxin GIIIB of Conus geographus (Geography cone).